The primary structure comprises 563 residues: MLEFAISAPLDTGAELLSDQVSANFPWLSLSILFPIVGAFLVPFIPDEGEGKQVRWFALGIALVTFVITVAAYLYGYDPSLSGLQLSERVSWLPDLGLTWAVGADGISMPLILLTSFITALAVLAAWPVTFKPKLFFFLILAMDGGQIAVFAVQDMLLFFLAWELELLPVYLLLAIWGGKKRQYAATKFIIYTAGSSLFILLVALAMGFFGGGTPNFEYTNLAQQSFGTGFQLLCYAGLLIAFGVKLPIVPLHTWLPDAHGEATAPVHMLLAGILLKMGGYALMRFNAQLLPEAHAQFAPLLIVLGVVNIIYAALTSFAQRNLKRKIAYSSISHMGFVLIGIGSFSALGTSGAMLQMISHGLIGASLFFLVGATYDRTHTLQLDEMGGVGQKMRIMFALWTVCALASLALPGMSGFVSELMVFVGFATDEAYTLTFRIVIAGLAAIGVILTPIYLLSMLREIFFGKENDQLVSHTNLVDAEPREVYIISCLLVPIIGIGLYPRLMTDSYTASIQELVKRDELALQRIKKPSALMIRNTTMTPAVVSSPRLPISQTRSEQLTRK.

Helical transmembrane passes span Phe25–Ile45, Trp56–Gly76, Val90–Pro110, Leu111–Phe131, Pro133–Val153, Leu157–Trp177, Phe189–Phe209, Gly230–Val250, Thr264–Met284, Phe298–Phe318, Met335–Leu355, Gln356–Asp376, Phe397–Val417, Ile438–Met458, and Val485–Met505.

This sequence belongs to the complex I subunit 4 family.

It localises to the cellular thylakoid membrane. The catalysed reaction is a plastoquinone + NADH + (n+1) H(+)(in) = a plastoquinol + NAD(+) + n H(+)(out). The enzyme catalyses a plastoquinone + NADPH + (n+1) H(+)(in) = a plastoquinol + NADP(+) + n H(+)(out). Its function is as follows. NDH-1 shuttles electrons from NAD(P)H, via FMN and iron-sulfur (Fe-S) centers, to quinones in the respiratory chain. The immediate electron acceptor for the enzyme in this species is believed to be plastoquinone. Couples the redox reaction to proton translocation (for every two electrons transferred, four hydrogen ions are translocated across the cytoplasmic membrane), and thus conserves the redox energy in a proton gradient. This chain is NAD(P)H-quinone oxidoreductase chain 4, found in Prochlorococcus marinus (strain MIT 9303).